The following is a 264-amino-acid chain: ATP synthase subunit a (264 aa).

5 helical membrane-spanning segments follow: residues 39–59 (LDTLIISVVLGALFILIFYIV), 97–117 (VAPLALTIFIWVFLMNFMDLV), 139–159 (TADPTLTFAMSITVFVLVIFY), 205–225 (LFGNLFAGELIFILIALLPWW), and 239–259 (LLVITVQAFIFMMLTVVYISL).

This sequence belongs to the ATPase A chain family. F-type ATPases have 2 components, CF(1) - the catalytic core - and CF(0) - the membrane proton channel. CF(1) has five subunits: alpha(3), beta(3), gamma(1), delta(1), epsilon(1). CF(0) has three main subunits: a(1), b(2) and c(9-12). The alpha and beta chains form an alternating ring which encloses part of the gamma chain. CF(1) is attached to CF(0) by a central stalk formed by the gamma and epsilon chains, while a peripheral stalk is formed by the delta and b chains.

It is found in the cell inner membrane. Its function is as follows. Key component of the proton channel; it plays a direct role in the translocation of protons across the membrane. This is ATP synthase subunit a from Coxiella burnetii (strain RSA 331 / Henzerling II).